A 348-amino-acid polypeptide reads, in one-letter code: Protein RecA (348 aa).

An ATP-binding site is contributed by 64–71 (GPESSGKT). Residues 325–335 (YEIDGANKEPL) are compositionally biased toward basic and acidic residues. Positions 325–348 (YEIDGANKEPLEETEETLSLLDDE) are disordered. Acidic residues predominate over residues 336 to 348 (EETEETLSLLDDE).

This sequence belongs to the RecA family.

It localises to the cytoplasm. Functionally, can catalyze the hydrolysis of ATP in the presence of single-stranded DNA, the ATP-dependent uptake of single-stranded DNA by duplex DNA, and the ATP-dependent hybridization of homologous single-stranded DNAs. It interacts with LexA causing its activation and leading to its autocatalytic cleavage. The sequence is that of Protein RecA from Listeria welshimeri serovar 6b (strain ATCC 35897 / DSM 20650 / CCUG 15529 / CIP 8149 / NCTC 11857 / SLCC 5334 / V8).